The primary structure comprises 401 residues: Ascaroside receptor GPR3 (401 aa).

Over 1–16 (MQPFGDAWSQRHLAGV) the chain is Extracellular. A helical transmembrane segment spans residues 17–37 (VLAGSVLSIVGSLYMILGFFF). The Cytoplasmic segment spans residues 38-47 (LRECRSFRHK). The chain crosses the membrane as a helical span at residues 48-68 (LILGLAVSDLLLALNFFIPSL). The Extracellular segment spans residues 69–93 (SMVTGREISSPWNEGFCSANGFLMQ). A disulfide bridge connects residues Cys85 and Cys159. The helical transmembrane segment at 94–114 (LFFAQIDVWQISIALITLLML) threads the bilayer. Over 115-128 (SGPSMVLKWIRENV) the chain is Cytoplasmic. A helical transmembrane segment spans residues 129-149 (WAVWLFPWLVSLIAAFFAFGF). Residues 150-175 (WDYANVGGFCWLGSRNIRLYFNYIPR) lie on the Extracellular side of the membrane. The helical transmembrane segment at 176-196 (WIIILVCLVIYIAVYRLILHA) threads the bilayer. Topologically, residues 197–294 (RRRANIQKTY…QKQVRKIAIQ (98 aa)) are cytoplasmic. The tract at residues 206–259 (YRGRASDRAPPQPVTTTAPATNPESEKVNPDEISSGNGSSSLDTSRSGSSTGFT) is disordered. Low complexity predominate over residues 239-257 (SSGNGSSSLDTSRSGSSTG). A helical membrane pass occupies residues 295 to 315 (MISYPLAYAVLWAIPTIVMII). The Extracellular segment spans residues 316-321 (QVARGG). Residues 322 to 342 (EGVSIHVEGLAKMLLVFNGFV) form a helical membrane-spanning segment. Residues 343–401 (DAHVYGFNERTAMGWRQRIRPAAQEDDEEAAGTSGGVHEVVSRPEPTLKNPNVWQQNMV) are Cytoplasmic-facing. The interval 362–401 (RPAAQEDDEEAAGTSGGVHEVVSRPEPTLKNPNVWQQNMV) is disordered. The span at 391-401 (KNPNVWQQNMV) shows a compositional bias: polar residues.

Belongs to the G-protein coupled receptor 1 family. As to quaternary structure, interacts with ascaroside receptor GPR2; may form a functional heterodimer. Interacts with guanine nucleotide-binding protein alpha GPA2; to activate adenylate cyclase and positively regulate nematode trap formation.

It localises to the cell membrane. In terms of biological role, g protein-coupled receptor that senses nematode ascaroside pheromones and signals via adenylate cyclase to positively regulate trap formation for nematode capture. The chain is Ascaroside receptor GPR3 from Arthrobotrys oligospora (strain ATCC 24927 / CBS 115.81 / DSM 1491) (Nematode-trapping fungus).